A 259-amino-acid chain; its full sequence is Polycomb group RING finger protein 1 (259 aa).

The segment at 45–84 (CYLCAGYFIDATTITECLHTFCKSCIVKYLQTSKYCPLCN) adopts an RING-type zinc-finger fold.

As to quaternary structure, component of a PRC1-like complex.

Its subcellular location is the nucleus. Component of a Polycomb group (PcG) multiprotein PRC1-like complex, a complex class required to maintain the transcriptionally repressive state of many genes, including Hox genes, throughout development. PcG PRC1 complex acts via chromatin remodeling and modification of histones; it mediates monoubiquitination of histone H2A 'Lys-119', rendering chromatin heritably changed in its expressibility. The chain is Polycomb group RING finger protein 1 (pcgf1) from Xenopus laevis (African clawed frog).